A 515-amino-acid polypeptide reads, in one-letter code: MDEFHRCGKEDSFWQQCFLYPLFFQEDLYAISHDHYLDVSSSSRPMEHLSSNDQLSFLTVKRLIGQIRQQNHSIVLFVNCDPNPLADRKKSFYSESVLEALTLVLEVPFSIWSKYSVEGMNESKSFRSIHSIFPFLEDKFPHSNSILDARIPYSIHPEILVRTFRRWIRDAPSLHPLRSVLYEYRNSPDNLQRSIIVVPRVNTRFFLFLWNYYVCECESILFSRLKRSSHSRSLSHGSFPQRTHFHRKIKHIIIFSRRNSLKSIWSLKDPKIHYVRYGERPIIAIKGAHLLVKKCRYYLLIFRQFYFHLWSEPYRVCSHQLSKNCSSSLGYFLRVRMNPILVRTKMLDELFIADLITDEIDPIVPIVPIIGLLATEKFCDISGRPISKLSWTSLTDDDILDRFDQIWRNLFHYYSGSFDRDGLYRIKYILSLSCAKTLACKHKSTIRVVRKELGPELFKKSFSKEREFYSLRFSSKAAARSQRERIWHSDIPQINPLANSWQKIQDLKIENLFDQ.

Belongs to the intron maturase 2 family. MatK subfamily.

It is found in the plastid. The protein resides in the chloroplast. Functionally, usually encoded in the trnK tRNA gene intron. Probably assists in splicing its own and other chloroplast group II introns. This Pinus attenuata (Knobcone pine) protein is Maturase K.